The primary structure comprises 231 residues: Probable methylthioribulose-1-phosphate dehydratase (231 aa).

C90 contacts substrate. 2 residues coordinate Zn(2+): H108 and H110. E132 functions as the Proton donor/acceptor in the catalytic mechanism. H188 contributes to the Zn(2+) binding site.

This sequence belongs to the aldolase class II family. MtnB subfamily. It depends on Zn(2+) as a cofactor.

Its subcellular location is the cytoplasm. It catalyses the reaction 5-(methylsulfanyl)-D-ribulose 1-phosphate = 5-methylsulfanyl-2,3-dioxopentyl phosphate + H2O. It functions in the pathway amino-acid biosynthesis; L-methionine biosynthesis via salvage pathway; L-methionine from S-methyl-5-thio-alpha-D-ribose 1-phosphate: step 2/6. In terms of biological role, catalyzes the dehydration of methylthioribulose-1-phosphate (MTRu-1-P) into 2,3-diketo-5-methylthiopentyl-1-phosphate (DK-MTP-1-P). The sequence is that of Probable methylthioribulose-1-phosphate dehydratase from Anopheles gambiae (African malaria mosquito).